Here is a 245-residue protein sequence, read N- to C-terminus: 1-(5-phosphoribosyl)-5-[(5-phosphoribosylamino)methylideneamino] imidazole-4-carboxamide isomerase (245 aa).

The active-site Proton acceptor is Asp11. The active-site Proton donor is Asp132.

The protein belongs to the HisA/HisF family.

It localises to the cytoplasm. It catalyses the reaction 1-(5-phospho-beta-D-ribosyl)-5-[(5-phospho-beta-D-ribosylamino)methylideneamino]imidazole-4-carboxamide = 5-[(5-phospho-1-deoxy-D-ribulos-1-ylimino)methylamino]-1-(5-phospho-beta-D-ribosyl)imidazole-4-carboxamide. Its pathway is amino-acid biosynthesis; L-histidine biosynthesis; L-histidine from 5-phospho-alpha-D-ribose 1-diphosphate: step 4/9. The chain is 1-(5-phosphoribosyl)-5-[(5-phosphoribosylamino)methylideneamino] imidazole-4-carboxamide isomerase from Geobacillus kaustophilus (strain HTA426).